The following is a 271-amino-acid chain: Formamidopyrimidine-DNA glycosylase (271 aa).

P2 acts as the Schiff-base intermediate with DNA in catalysis. E3 acts as the Proton donor in catalysis. K57 (proton donor; for beta-elimination activity) is an active-site residue. 3 residues coordinate DNA: H90, R109, and K151. Residues 236–270 (HVYGRGGESCTQCGNLLSEIKLGQRATVFCGLCQT) form an FPG-type zinc finger. Catalysis depends on R260, which acts as the Proton donor; for delta-elimination activity.

The protein belongs to the FPG family. As to quaternary structure, monomer. Requires Zn(2+) as cofactor.

The enzyme catalyses Hydrolysis of DNA containing ring-opened 7-methylguanine residues, releasing 2,6-diamino-4-hydroxy-5-(N-methyl)formamidopyrimidine.. It carries out the reaction 2'-deoxyribonucleotide-(2'-deoxyribose 5'-phosphate)-2'-deoxyribonucleotide-DNA = a 3'-end 2'-deoxyribonucleotide-(2,3-dehydro-2,3-deoxyribose 5'-phosphate)-DNA + a 5'-end 5'-phospho-2'-deoxyribonucleoside-DNA + H(+). Involved in base excision repair of DNA damaged by oxidation or by mutagenic agents. Acts as a DNA glycosylase that recognizes and removes damaged bases. Has a preference for oxidized purines, such as 7,8-dihydro-8-oxoguanine (8-oxoG). Has AP (apurinic/apyrimidinic) lyase activity and introduces nicks in the DNA strand. Cleaves the DNA backbone by beta-delta elimination to generate a single-strand break at the site of the removed base with both 3'- and 5'-phosphates. This Shewanella woodyi (strain ATCC 51908 / MS32) protein is Formamidopyrimidine-DNA glycosylase.